The chain runs to 173 residues: Putative C-type lectin protein FPV198 (173 aa).

Residues 50-169 (GMSGWVQINN…CNKKHTGICF (120 aa)) form the C-type lectin domain.

The sequence is that of Putative C-type lectin protein FPV198 from Vertebrata (FPV).